Here is a 219-residue protein sequence, read N- to C-terminus: Ribose-5-phosphate isomerase A (219 aa).

Substrate contacts are provided by residues 28–31 (TGST), 81–84 (DGAD), and 94–97 (KGGG). The active-site Proton acceptor is the E103. K121 serves as a coordination point for substrate.

It belongs to the ribose 5-phosphate isomerase family. As to quaternary structure, homodimer.

The catalysed reaction is aldehydo-D-ribose 5-phosphate = D-ribulose 5-phosphate. It participates in carbohydrate degradation; pentose phosphate pathway; D-ribose 5-phosphate from D-ribulose 5-phosphate (non-oxidative stage): step 1/1. In terms of biological role, catalyzes the reversible conversion of ribose-5-phosphate to ribulose 5-phosphate. In Enterobacter cloacae, this protein is Ribose-5-phosphate isomerase A.